We begin with the raw amino-acid sequence, 464 residues long: Methionine aminopeptidase 2-2 (464 aa).

Residues 1-106 (MGAKTYEGGD…PRVPLSQLFP (106 aa)) form a disordered region. Residues 37–53 (EDGDGEFGSDDDDDGGD) show a composition bias toward acidic residues. Positions 70-86 (PKKKKRSKKKKNNKKKS) are enriched in basic residues. Substrate is bound at residue His216. Residues Asp237, Asp248, and His317 each coordinate a divalent metal cation. His325 lines the substrate pocket. Positions 350 and 445 each coordinate a divalent metal cation.

It belongs to the peptidase M24A family. Methionine aminopeptidase eukaryotic type 2 subfamily. Co(2+) serves as cofactor. Requires Zn(2+) as cofactor. The cofactor is Mn(2+). It depends on Fe(2+) as a cofactor.

Its subcellular location is the cytoplasm. It carries out the reaction Release of N-terminal amino acids, preferentially methionine, from peptides and arylamides.. In terms of biological role, cotranslationally removes the N-terminal methionine from nascent proteins. The N-terminal methionine is often cleaved when the second residue in the primary sequence is small and uncharged (Met-Ala-, Cys, Gly, Pro, Ser, Thr, or Val). The polypeptide is Methionine aminopeptidase 2-2 (Talaromyces stipitatus (strain ATCC 10500 / CBS 375.48 / QM 6759 / NRRL 1006) (Penicillium stipitatum)).